A 148-amino-acid polypeptide reads, in one-letter code: MKKVTGQIKLQLPAGKANPAPPVGPALGQHGVNIMEFCKQFNAATQAQAKEALIIPVIITVYQDRSFTFQLKTPPAAILLKKAAGLHTEKKKGSGAHKPGKEKVGQVTRKQVEQIAKTKMQDMTAGSLEAAMRTVEGTALSMGIDVVG.

The interval 89–108 (EKKKGSGAHKPGKEKVGQVT) is disordered.

It belongs to the universal ribosomal protein uL11 family. In terms of assembly, part of the ribosomal stalk of the 50S ribosomal subunit. Interacts with L10 and the large rRNA to form the base of the stalk. L10 forms an elongated spine to which L12 dimers bind in a sequential fashion forming a multimeric L10(L12)X complex. In terms of processing, one or more lysine residues are methylated.

Forms part of the ribosomal stalk which helps the ribosome interact with GTP-bound translation factors. This is Large ribosomal subunit protein uL11 from Anaeromyxobacter sp. (strain Fw109-5).